The chain runs to 527 residues: Glutamate--cysteine ligase (527 aa).

This sequence belongs to the glutamate--cysteine ligase type 1 family. Type 1 subfamily.

The enzyme catalyses L-cysteine + L-glutamate + ATP = gamma-L-glutamyl-L-cysteine + ADP + phosphate + H(+). It functions in the pathway sulfur metabolism; glutathione biosynthesis; glutathione from L-cysteine and L-glutamate: step 1/2. This chain is Glutamate--cysteine ligase, found in Pseudomonas paraeruginosa (strain DSM 24068 / PA7) (Pseudomonas aeruginosa (strain PA7)).